Here is a 161-residue protein sequence, read N- to C-terminus: Lipoprotein LpqH (161 aa).

An N-terminal signal peptide occupies residues 1 to 21 (MNRQLRFAVAGPEILAAVVSG). A compositionally biased stretch (low complexity) spans 21–46 (GCSSGNKSAPSSSASSSSTSPSASSG). The disordered stretch occupies residues 21 to 49 (GCSSGNKSAPSSSASSSSTSPSASSGGAA). C22 carries the N-palmitoyl cysteine lipid modification. C22 is lipidated: S-diacylglycerol cysteine.

This sequence belongs to the mycobacterial 19 kDa antigen family. In terms of processing, modified by Lgt on Cys-22 with an S-linked diacylglycerol with a mixture of C16, C18 and C19 fatty acids, signal peptide is removed by LspA, modifed by Lnt with an amide-linked mixture of C16 and C19 fatty acids.

It localises to the cell membrane. Might be involved in ligand transport. A host TLR2 agonist, modifies host gene expression in response to pathogen. The sequence is that of Lipoprotein LpqH (lpqH) from Mycobacterium avium.